A 424-amino-acid chain; its full sequence is Serine hydroxymethyltransferase (424 aa).

(6S)-5,6,7,8-tetrahydrofolate is bound by residues leucine 113 and 117 to 119 (GHL). Lysine 222 is modified (N6-(pyridoxal phosphate)lysine). A (6S)-5,6,7,8-tetrahydrofolate-binding site is contributed by 361-363 (SPF).

This sequence belongs to the SHMT family. As to quaternary structure, homodimer. The cofactor is pyridoxal 5'-phosphate.

The protein resides in the cytoplasm. It catalyses the reaction (6R)-5,10-methylene-5,6,7,8-tetrahydrofolate + glycine + H2O = (6S)-5,6,7,8-tetrahydrofolate + L-serine. It participates in one-carbon metabolism; tetrahydrofolate interconversion. The protein operates within amino-acid biosynthesis; glycine biosynthesis; glycine from L-serine: step 1/1. Functionally, catalyzes the reversible interconversion of serine and glycine with tetrahydrofolate (THF) serving as the one-carbon carrier. This reaction serves as the major source of one-carbon groups required for the biosynthesis of purines, thymidylate, methionine, and other important biomolecules. Also exhibits THF-independent aldolase activity toward beta-hydroxyamino acids, producing glycine and aldehydes, via a retro-aldol mechanism. The protein is Serine hydroxymethyltransferase of Flavobacterium johnsoniae (strain ATCC 17061 / DSM 2064 / JCM 8514 / BCRC 14874 / CCUG 350202 / NBRC 14942 / NCIMB 11054 / UW101) (Cytophaga johnsonae).